A 218-amino-acid chain; its full sequence is Lipoprotein-releasing system ATP-binding protein LolD (218 aa).

An ABC transporter domain is found at 2–218 (IKLEGITKSF…HMVDGTIKKD (217 aa)). 34–41 (GPSGAGKT) serves as a coordination point for ATP.

This sequence belongs to the ABC transporter superfamily. Lipoprotein translocase (TC 3.A.1.125) family. The complex is composed of two ATP-binding proteins (LolD) and two transmembrane proteins (LolC and LolE).

It localises to the cell inner membrane. Functionally, part of the ABC transporter complex LolCDE involved in the translocation of mature outer membrane-directed lipoproteins, from the inner membrane to the periplasmic chaperone, LolA. Responsible for the formation of the LolA-lipoprotein complex in an ATP-dependent manner. The polypeptide is Lipoprotein-releasing system ATP-binding protein LolD (Bacteroides thetaiotaomicron (strain ATCC 29148 / DSM 2079 / JCM 5827 / CCUG 10774 / NCTC 10582 / VPI-5482 / E50)).